We begin with the raw amino-acid sequence, 291 residues long: 4-hydroxy-tetrahydrodipicolinate synthase (291 aa).

Threonine 44 lines the pyruvate pocket. Residue tyrosine 132 is the Proton donor/acceptor of the active site. Lysine 160 serves as the catalytic Schiff-base intermediate with substrate. Residue valine 202 participates in pyruvate binding.

The protein belongs to the DapA family. Homotetramer; dimer of dimers.

The protein resides in the cytoplasm. The enzyme catalyses L-aspartate 4-semialdehyde + pyruvate = (2S,4S)-4-hydroxy-2,3,4,5-tetrahydrodipicolinate + H2O + H(+). Its pathway is amino-acid biosynthesis; L-lysine biosynthesis via DAP pathway; (S)-tetrahydrodipicolinate from L-aspartate: step 3/4. In terms of biological role, catalyzes the condensation of (S)-aspartate-beta-semialdehyde [(S)-ASA] and pyruvate to 4-hydroxy-tetrahydrodipicolinate (HTPA). The polypeptide is 4-hydroxy-tetrahydrodipicolinate synthase (Clostridium perfringens (strain ATCC 13124 / DSM 756 / JCM 1290 / NCIMB 6125 / NCTC 8237 / Type A)).